The chain runs to 60 residues: MSNMPVLIITLLLFSMYISTAAQKPTEIKCRYPADCHIMCRKVTGRAEGKCMNGKCTCYY.

Positions 1–22 are cleaved as a signal peptide; it reads MSNMPVLIITLLLFSMYISTAA. 3 disulfides stabilise this stretch: cysteine 30/cysteine 51, cysteine 36/cysteine 56, and cysteine 40/cysteine 58.

The protein belongs to the short scorpion toxin superfamily. Potassium channel inhibitor family. Alpha-KTx 12 subfamily. In terms of tissue distribution, expressed by the venom gland.

It is found in the secreted. Inhibits voltage-gated potassium channels. The sequence is that of Potassium channel toxin alpha-KTx 12.7 from Lychas mucronatus (Chinese swimming scorpion).